We begin with the raw amino-acid sequence, 118 residues long: MEVGIDIVSLERIEVLYSRYGVRFLEKILLPEEVALCLQKPQIVASVAGRFAAKEAIVKALGSGFAQGVHWKSFAILNDAAGRPYVKVIDDECLPPSSVVKLSISHDRHSAVAVAIIE.

Residues aspartate 6 and glutamate 55 each contribute to the Mg(2+) site.

The protein belongs to the P-Pant transferase superfamily. AcpS family. The cofactor is Mg(2+).

The protein localises to the cytoplasm. It catalyses the reaction apo-[ACP] + CoA = holo-[ACP] + adenosine 3',5'-bisphosphate + H(+). Transfers the 4'-phosphopantetheine moiety from coenzyme A to a Ser of acyl-carrier-protein. In Chlorobium chlorochromatii (strain CaD3), this protein is Holo-[acyl-carrier-protein] synthase.